The sequence spans 156 residues: Oxidized purine nucleoside triphosphate hydrolase (156 aa).

The 130-residue stretch at 3-132 folds into the Nudix hydrolase domain; it reads ASRLYTLVLV…WFPLLLQKKK (130 aa). 2-oxo-dATP is bound at residue Thr-8. Residues Thr-8 and Lys-23 each coordinate 8-oxo-dGMP. 2 residues coordinate 8-oxo-dGTP: Thr-8 and Lys-23. N(6)-methyl-AMP-binding residues include Thr-8 and Lys-23. O(6)-methyl-dGMP contacts are provided by Thr-8 and Lys-23. Position 27 (Phe-27) interacts with 8-oxo-ATP. Residues Asn-33 and 35-38 each bind 2-oxo-dATP; that span reads FGGK. 8-oxo-dGMP is bound at residue Asn-33. Residues Asn-33 and 35-38 each bind 8-oxo-dGTP; that span reads FGGK. Position 33 (Asn-33) interacts with O(6)-methyl-dGMP. 8-oxo-ATP is bound by residues 35-38 and Glu-52; that span reads FGGK. Mg(2+) is bound by residues Gly-36, Glu-52, Glu-55, Glu-56, and Glu-100. The Nudix box signature appears at 37–58; it reads GKVQEGETIEDGARRELQEESG. Residue Glu-56 coordinates 8-oxo-ATP. Residue 117 to 120 participates in 2-oxo-dATP binding; that stretch reads WPDD. 117–120 provides a ligand contact to 8-oxo-dGMP; sequence WPDD. 117–120 contributes to the 8-oxo-dGTP binding site; the sequence is WPDD. 117–120 lines the N(6)-methyl-AMP pocket; that stretch reads WPDD. 117 to 120 serves as a coordination point for O(6)-methyl-dGMP; sequence WPDD. 117–120 lines the 8-oxo-ATP pocket; the sequence is WPDD.

Belongs to the Nudix hydrolase family. As to quaternary structure, monomer. Requires Mg(2+) as cofactor. The N-terminus is blocked. As to expression, widely expressed with highest expression in thymus, testis, embryo and proliferating blood lymphocytes.

It is found in the cytoplasm. Its subcellular location is the cytosol. The protein resides in the mitochondrion matrix. The protein localises to the nucleus. It carries out the reaction 2-oxo-dATP + H2O = 2-oxo-dAMP + diphosphate + H(+). The enzyme catalyses 2-oxo-ATP + H2O = 2-oxo-AMP + diphosphate + H(+). The catalysed reaction is 8-oxo-dGTP + H2O = 8-oxo-dGMP + diphosphate + H(+). It catalyses the reaction 8-oxo-dATP + H2O = 8-oxo-dAMP + diphosphate + H(+). It carries out the reaction O(6)-methyl-dGTP + H2O = O(6)-methyl-dGMP + diphosphate + H(+). The enzyme catalyses N(6)-methyl-dATP + H2O = N(6)-methyl-dAMP + diphosphate + H(+). The catalysed reaction is N(6)-methyl-ATP + H2O = N(6)-methyl-AMP + diphosphate + H(+). Its activity is regulated as follows. Inhibited by 2-oxo-dADP and 8-oxo-dGDP. In terms of biological role, oxidized purine nucleoside triphosphate hydrolase which is a prominent sanitizer of the oxidized nucleotide pool. Catalyzes the hydrolysis of 2-oxo-dATP (2-hydroxy-dATP) into 2-oxo-dAMP. Also has a significant hydrolase activity toward 2-oxo-ATP, 8-oxo-dGTP and 8-oxo-dATP. Through the hydrolysis of oxidized purine nucleoside triphosphates, prevents their incorporation into DNA and the subsequent transversions A:T to C:G and G:C to T:A. Also catalyzes the hydrolysis of methylated purine nucleoside triphosphate preventing their integration into DNA. Through this antimutagenic activity protects cells from oxidative stress. The sequence is that of Oxidized purine nucleoside triphosphate hydrolase (NUDT1) from Homo sapiens (Human).